The chain runs to 1997 residues: Nucleoprotein TPR (1997 aa).

Coiled coils occupy residues 1-36 (QEQH…NDLL), 101-277 (EIVK…HQMT), 335-1103 (DSTE…IKTI), and 1129-1305 (AEAS…EPQE). Composition is skewed to basic and acidic residues over residues 672–702 (SSEY…KTVE) and 1290–1305 (REQQ…EPQE). 6 disordered regions span residues 672–706 (SSEY…QMEQ), 1290–1352 (REQQ…AAVP), 1438–1529 (AFVQ…KTET), 1561–1752 (IQTS…RRQS), 1795–1832 (AIHS…ASQG), and 1870–1997 (ENPA…RSNI). 3 stretches are compositionally biased toward polar residues: residues 1306–1321 (TTRI…QPTT), 1328–1347 (SANT…SKVT), and 1446–1487 (SHAT…SSSI). Residues 1511-1529 (DQQRTKKRKEEDIEEKTET) are compositionally biased toward basic and acidic residues. Positions 1561–1587 (IQTSQVIESQAPEQLQNVQSTQDSLQD) are enriched in polar residues. 2 stretches are compositionally biased toward acidic residues: residues 1601–1637 (SDEE…DSNE) and 1644–1667 (GNED…ETED). Composition is skewed to polar residues over residues 1692–1709 (AEST…SASD), 1817–1830 (QASS…QLAS), and 1879–1899 (HASQ…TSVD). Positions 1902–1915 (AADEGDEVFVEAES) are enriched in acidic residues. Low complexity predominate over residues 1950–1959 (SSSIADTSSS).

It belongs to the TPR family. Homodimer. Part of the nuclear pore complex (NPC). Interacts with nuclear receptor KPNB1; the interaction occurs in a RanGTP-dependent manner. Associates with the Importin alpha/Importin beta receptor. In terms of tissue distribution, expressed in epithelial cells, oocytes and egg (at protein level).

It localises to the nucleus. It is found in the nucleus membrane. Its subcellular location is the nucleus envelope. The protein localises to the nuclear pore complex. The protein resides in the cytoplasm. It localises to the cytoskeleton. It is found in the spindle. Its subcellular location is the chromosome. The protein localises to the centromere. The protein resides in the kinetochore. In terms of biological role, component of the nuclear pore complex (NPC), a complex required for the trafficking across the nuclear envelope. Functions as a scaffolding element in the nuclear phase of the NPC essential for normal nucleocytoplasmic transport of proteins and mRNAs, plays a role in the establishment of nuclear-peripheral chromatin compartmentalization in interphase, and in the mitotic spindle checkpoint signaling during mitosis. Involved in the quality control and retention of unspliced mRNAs in the nucleus. Implicated in nuclear export of mRNAs transcribed from heat shock gene promoters. May play a limited role in the regulation of nuclear protein export. May be involved in the formation and/or maintenance of NPC-associated perinuclear heterochromatin exclusion zones (HEZs). Finally, may act as a spatial regulator of the spindle-assembly checkpoint (SAC) response. This is Nucleoprotein TPR from Xenopus laevis (African clawed frog).